Reading from the N-terminus, the 30-residue chain is Hainantoxin F7-28.42 (30 aa).

Expressed by the venom gland.

Its subcellular location is the secreted. This is Hainantoxin F7-28.42 from Cyriopagopus hainanus (Chinese bird spider).